The primary structure comprises 488 residues: E3 ubiquitin-protein ligase TRIM39 (488 aa).

An RING-type zinc finger spans residues 29-70 (CSVCLEYLKEPVIIECGHNFCKACITRWWEDLERDFPCPVCR). The B box-type zinc-finger motif lies at 102–143 (RDESLCSQHHEPLSLFCYEDQEAVCLICAISHTHRPHTVVPM). Residues Cys107, His110, Cys129, and His135 each contribute to the Zn(2+) site. A coiled-coil region spans residues 181-250 (ELKRLVESRR…AHLAAEVEGK (70 aa)). Interaction with CDKN1A stretches follow at residues 268–307 (KCEK…QLIA) and 359–488 (TSGR…TDWE). In terms of domain architecture, B30.2/SPRY spans 289 to 484 (SNFPRQYFAL…NAAPLTIRPP (196 aa)).

The protein belongs to the TRIM/RBCC family. In terms of assembly, interacts with MOAP1. Interacts with CDKN1A. In terms of processing, autoubiquitinated.

Its subcellular location is the cytoplasm. It localises to the cytosol. The protein resides in the mitochondrion. It is found in the nucleus. It catalyses the reaction S-ubiquitinyl-[E2 ubiquitin-conjugating enzyme]-L-cysteine + [acceptor protein]-L-lysine = [E2 ubiquitin-conjugating enzyme]-L-cysteine + N(6)-ubiquitinyl-[acceptor protein]-L-lysine.. It participates in protein modification; protein ubiquitination. Its function is as follows. E3 ubiquitin-protein ligase. May facilitate apoptosis by inhibiting APC/C-Cdh1-mediated poly-ubiquitination and subsequent proteasome-mediated degradation of the pro-apoptotic protein MOAP1. Regulates the G1/S transition of the cell cycle and DNA damage-induced G2 arrest by stabilizing CDKN1A/p21. Positively regulates CDKN1A/p21 stability by competing with DTL for CDKN1A/p21 binding, therefore disrupting DCX(DTL) E3 ubiquitin ligase complex-mediated CDKN1A/p21 ubiquitination and degradation. This chain is E3 ubiquitin-protein ligase TRIM39 (Trim39), found in Mus musculus (Mouse).